The following is a 92-amino-acid chain: YcgL domain-containing protein VC0395_A1544/VC395_2072 (92 aa).

In terms of domain architecture, YcgL spans 1–84; the sequence is MLCSIYKSPK…PPENLLEQHK (84 aa). The disordered stretch occupies residues 71-92; it reads QLPPPPENLLEQHKERKARQTP.

The polypeptide is YcgL domain-containing protein VC0395_A1544/VC395_2072 (Vibrio cholerae serotype O1 (strain ATCC 39541 / Classical Ogawa 395 / O395)).